The following is a 24-amino-acid chain: Skin secreted peptide 1 (24 aa).

As to expression, expressed by the skin glands.

It is found in the secreted. The protein is Skin secreted peptide 1 of Ascaphus truei (Coastal tailed frog).